We begin with the raw amino-acid sequence, 576 residues long: NADH-quinone oxidoreductase subunit C/D (576 aa).

Residues 1 to 176 (MAWISLEKAK…NLEGLFNYDR (176 aa)) are NADH dehydrogenase I subunit C. Residues 200–576 (SQIVLNWGPL…IDPVVGETDR (377 aa)) are NADH dehydrogenase I subunit D.

This sequence in the N-terminal section; belongs to the complex I 30 kDa subunit family. It in the C-terminal section; belongs to the complex I 49 kDa subunit family. As to quaternary structure, NDH-1 is composed of 13 different subunits. Subunits NuoB, CD, E, F, and G constitute the peripheral sector of the complex.

The protein localises to the cell inner membrane. The enzyme catalyses a quinone + NADH + 5 H(+)(in) = a quinol + NAD(+) + 4 H(+)(out). Its function is as follows. NDH-1 shuttles electrons from NADH, via FMN and iron-sulfur (Fe-S) centers, to quinones in the respiratory chain. The immediate electron acceptor for the enzyme in this species is believed to be ubiquinone. Couples the redox reaction to proton translocation (for every two electrons transferred, four hydrogen ions are translocated across the cytoplasmic membrane), and thus conserves the redox energy in a proton gradient. The protein is NADH-quinone oxidoreductase subunit C/D of Sulfurihydrogenibium sp. (strain YO3AOP1).